A 1416-amino-acid chain; its full sequence is DNA-directed RNA polymerase subunit beta' (1416 aa).

Residues C68, C70, C83, and C86 each coordinate Zn(2+). Mg(2+) contacts are provided by D458, D460, and D462. The Zn(2+) site is built by C811, C884, C891, and C894.

This sequence belongs to the RNA polymerase beta' chain family. As to quaternary structure, the RNAP catalytic core consists of 2 alpha, 1 beta, 1 beta' and 1 omega subunit. When a sigma factor is associated with the core the holoenzyme is formed, which can initiate transcription. Mg(2+) serves as cofactor. Zn(2+) is required as a cofactor.

The enzyme catalyses RNA(n) + a ribonucleoside 5'-triphosphate = RNA(n+1) + diphosphate. DNA-dependent RNA polymerase catalyzes the transcription of DNA into RNA using the four ribonucleoside triphosphates as substrates. This is DNA-directed RNA polymerase subunit beta' from Francisella philomiragia subsp. philomiragia (strain ATCC 25017 / CCUG 19701 / FSC 153 / O#319-036).